The chain runs to 431 residues: Tyrosine--tRNA ligase (431 aa).

L-tyrosine is bound at residue Y34. Residues 39-48 (PTADSLHIGH) carry the 'HIGH' region motif. Residues Y171 and Q175 each coordinate L-tyrosine. A 'KMSKS' region motif is present at residues 231-235 (KFGKT). K234 is a binding site for ATP. Residues 353–422 (INAVEALVKT…GKYTILRRGK (70 aa)) form the S4 RNA-binding domain.

The protein belongs to the class-I aminoacyl-tRNA synthetase family. TyrS type 1 subfamily. As to quaternary structure, homodimer.

The protein resides in the cytoplasm. The enzyme catalyses tRNA(Tyr) + L-tyrosine + ATP = L-tyrosyl-tRNA(Tyr) + AMP + diphosphate + H(+). Catalyzes the attachment of tyrosine to tRNA(Tyr) in a two-step reaction: tyrosine is first activated by ATP to form Tyr-AMP and then transferred to the acceptor end of tRNA(Tyr). The protein is Tyrosine--tRNA ligase of Neisseria gonorrhoeae (strain ATCC 700825 / FA 1090).